The chain runs to 773 residues: Lon protease homolog 2, peroxisomal (773 aa).

One can recognise a Lon N-terminal domain in the interval 9-198; that stretch reads LPVILVTSGV…MCIKWMNEKK (190 aa). ATP is bound at residue 336–343; it reads GPPGIGKT. In terms of domain architecture, Lon proteolytic spans 587–766; that stretch reads PLPAGVCFGL…EDVIGAMMDK (180 aa). Catalysis depends on residues serine 672 and lysine 715. The short motif at 771–773 is the Microbody targeting signal element; that stretch reads AKL.

It belongs to the peptidase S16 family.

The protein resides in the peroxisome matrix. The enzyme catalyses Hydrolysis of proteins in presence of ATP.. Functionally, ATP-dependent serine protease that mediates the selective degradation of misfolded and unassembled polypeptides in the peroxisomal matrix. Necessary for type 2 peroxisome targeting signal (PTS2)-containing protein processing and facilitates peroxisome matrix protein import. The polypeptide is Lon protease homolog 2, peroxisomal (Caenorhabditis elegans).